Consider the following 529-residue polypeptide: Bifunctional purine biosynthesis protein PurH (529 aa).

Positions 1 to 148 constitute an MGS-like domain; that stretch reads MQQRRPIRRA…KNHKDVAIVV (148 aa).

Belongs to the PurH family.

It carries out the reaction (6R)-10-formyltetrahydrofolate + 5-amino-1-(5-phospho-beta-D-ribosyl)imidazole-4-carboxamide = 5-formamido-1-(5-phospho-D-ribosyl)imidazole-4-carboxamide + (6S)-5,6,7,8-tetrahydrofolate. The catalysed reaction is IMP + H2O = 5-formamido-1-(5-phospho-D-ribosyl)imidazole-4-carboxamide. It participates in purine metabolism; IMP biosynthesis via de novo pathway; 5-formamido-1-(5-phospho-D-ribosyl)imidazole-4-carboxamide from 5-amino-1-(5-phospho-D-ribosyl)imidazole-4-carboxamide (10-formyl THF route): step 1/1. It functions in the pathway purine metabolism; IMP biosynthesis via de novo pathway; IMP from 5-formamido-1-(5-phospho-D-ribosyl)imidazole-4-carboxamide: step 1/1. In Pectobacterium atrosepticum (strain SCRI 1043 / ATCC BAA-672) (Erwinia carotovora subsp. atroseptica), this protein is Bifunctional purine biosynthesis protein PurH.